A 307-amino-acid polypeptide reads, in one-letter code: UPF0276 protein HI_1600 (307 aa).

It belongs to the UPF0276 family.

The protein is UPF0276 protein HI_1600 of Haemophilus influenzae (strain ATCC 51907 / DSM 11121 / KW20 / Rd).